The following is a 357-amino-acid chain: Protein RecA (357 aa).

ATP is bound at residue 73-80; sequence GPESSGKT.

Belongs to the RecA family.

The protein resides in the cytoplasm. In terms of biological role, can catalyze the hydrolysis of ATP in the presence of single-stranded DNA, the ATP-dependent uptake of single-stranded DNA by duplex DNA, and the ATP-dependent hybridization of homologous single-stranded DNAs. It interacts with LexA causing its activation and leading to its autocatalytic cleavage. The protein is Protein RecA of Methylibium petroleiphilum (strain ATCC BAA-1232 / LMG 22953 / PM1).